Consider the following 470-residue polypeptide: Uronate isomerase (470 aa).

The protein belongs to the metallo-dependent hydrolases superfamily. Uronate isomerase family.

It carries out the reaction D-glucuronate = D-fructuronate. The catalysed reaction is aldehydo-D-galacturonate = keto-D-tagaturonate. The protein operates within carbohydrate metabolism; pentose and glucuronate interconversion. The sequence is that of Uronate isomerase from Salmonella typhi.